The following is a 246-amino-acid chain: MQALLFLMALLLPSGAGAEEIIGGVESRPHSRPYMAHLEITTERGFTATCGGFLITRQFVMTAAHCSGREITVTLGAHDVSKTESTQQKIKVEKQIVHPKYNFYSNLHDIMLLKLQKKAKETPSVNVIPLPRPSDFIKPGKMCRAAGWGRTGVTEPTSDTLREVKLRIMDKEACKNYWHYDYNLQVCVGSPRKKRSAYKGDSGGPLLCAGVAHGIVSYGRGDAKPPAVFTRISSYVPWINRVIKGE.

The N-terminal stretch at 1 to 18 is a signal peptide; that stretch reads MQALLFLMALLLPSGAGA. A propeptide spans 19–20 (activation peptide); sequence EE. The Peptidase S1 domain maps to 21-244; that stretch reads IIGGVESRPH…YVPWINRVIK (224 aa). An intrachain disulfide couples C50 to C66. Active-site charge relay system residues include H65 and D109. Intrachain disulfides connect C143–C208 and C174–C187. S202 (charge relay system) is an active-site residue.

It belongs to the peptidase S1 family. Granzyme subfamily. Monomer. Interacts with iripin-2, a serine protease inhibitor from Ixodes ricinus saliva. Submucosal mast cells. In femoral muscle, detected in myocytes but not in mast cells.

Its activity is regulated as follows. Completely inhibited by serine protease inhibitors such as chymostatin, diisopropylfluorophosphate and phenylmethylsulfonyl fluoride, but not by p-tosyl-L-phenylalanine chloromethyl ketone, p-tosyl-L-lysine chloromethyl ketone, pepstatin, E-64, EDTA or o-phenanthroline. Also inhibited by lima bean trypsin inhibitor, soy bean trypsin inhibitor and human plasma alpha1-antichymotrypsin. Its function is as follows. Has chymotrypsin-like activity. Hydrolyzes the amide bonds of synthetic substrates having Tyr and Phe residues at the P1 position. Preferentially hydrolyzes the 'Tyr-4-|-Ile-5' bond of angiotensin I and the 'Phe-20-|-Ala-21' bond of amyloid beta-protein, and is less active towards the 'Phe-8-|-His-9' bond of angiotensin I and the 'Phe-4-|-Ala-5' and 'Tyr-10-|-Glu-11' bonds of amyloid beta-protein. Involved in thrombin regulation and fibronectin processing. In Mus musculus (Mouse), this protein is Mast cell protease 4 (Mcpt4).